A 103-amino-acid polypeptide reads, in one-letter code: Cell division suppressor protein YneA (103 aa).

The 52-residue stretch at V36–L87 folds into the LysM domain.

This sequence belongs to the YneA family.

Its subcellular location is the cytoplasm. Inhibits cell division during the SOS response. Affects a later stage of the cell division protein assembly, after the assembly of the Z ring, by probably suppressing recruitment of FtsL and/or DivIC to the division machinery. The sequence is that of Cell division suppressor protein YneA from Bacillus licheniformis (strain ATCC 14580 / DSM 13 / JCM 2505 / CCUG 7422 / NBRC 12200 / NCIMB 9375 / NCTC 10341 / NRRL NRS-1264 / Gibson 46).